The following is a 447-amino-acid chain: Beclin-2 (447 aa).

Positions 169–228 (EALHAELCAELSSLEQEEARLTQELEDLDGHHARVAAELRAAQAESKELYKQHEQHRVEY) form a coiled coil. The segment at 186 to 256 (EARLTQELED…NQLTYALSQQ (71 aa)) is required for homodimer formation.

It belongs to the beclin family. Homodimer (via coiled-coil domain). Interacts (via coiled-coil domain) with ATG14 (via coiled-coil domain); this interaction is tighter than BECN2 self-association. Interacts with AMBRA1, UVRAG and PIK3C3/VPS34; these interactions are not disrupted by starvation. Does not interact with RUBCN. Interacts (via N-terminus) with GPRASP1/GASP1; the interaction is direct. As to expression, expressed in brain, skeletal muscle, placenta, thymus and uterus. Expressed at a lower level in liver, testis, stomach, and 17-day-old embryos.

It is found in the cytoplasm. Involved in 2 distinct lysosomal degradation pathways: acts as a regulator of autophagy and as a regulator of G-protein coupled receptors turnover. Regulates degradation in lysosomes of a variety of G-protein coupled receptors via its interaction with GPRASP1/GASP1. This chain is Beclin-2, found in Mus musculus (Mouse).